Reading from the N-terminus, the 308-residue chain is ADP-L-glycero-D-manno-heptose-6-epimerase (308 aa).

Residues 10-11 (MI), 31-32 (DN), Lys38, Lys53, 75-79 (EGACS), and Asn92 contribute to the NADP(+) site. Tyr140 acts as the Proton acceptor in catalysis. Residue Lys144 coordinates NADP(+). Position 169 (Asn169) interacts with substrate. The NADP(+) site is built by Val170 and Lys178. Lys178 serves as the catalytic Proton acceptor. Substrate-binding positions include Ser180, His187, 201–204 (FEGS), Arg209, and Tyr272.

It belongs to the NAD(P)-dependent epimerase/dehydratase family. HldD subfamily. Homopentamer. NADP(+) is required as a cofactor.

It carries out the reaction ADP-D-glycero-beta-D-manno-heptose = ADP-L-glycero-beta-D-manno-heptose. Its pathway is nucleotide-sugar biosynthesis; ADP-L-glycero-beta-D-manno-heptose biosynthesis; ADP-L-glycero-beta-D-manno-heptose from D-glycero-beta-D-manno-heptose 7-phosphate: step 4/4. Catalyzes the interconversion between ADP-D-glycero-beta-D-manno-heptose and ADP-L-glycero-beta-D-manno-heptose via an epimerization at carbon 6 of the heptose. In Actinobacillus pleuropneumoniae serotype 5b (strain L20), this protein is ADP-L-glycero-D-manno-heptose-6-epimerase.